A 499-amino-acid chain; its full sequence is GTPase Der (499 aa).

EngA-type G domains are found at residues 3 to 166 and 213 to 386; these read PVVA…LETL and IKFA…QSAT. Residues 9–16, 56–60, 118–121, 219–226, 266–270, and 331–334 each bind GTP; these read GRPNVGKS, DTGGI, NKTD, DTAGV, and NKWD. The 85-residue stretch at 387–471 folds into the KH-like domain; that stretch reads RRTSTAMLTR…PIRVEFQESA (85 aa). The tract at residues 476 to 499 is disordered; that stretch reads GRKNTMTLSQERQRKRLLKAKTKK. Residues 488 to 499 show a composition bias toward basic residues; it reads QRKRLLKAKTKK.

It belongs to the TRAFAC class TrmE-Era-EngA-EngB-Septin-like GTPase superfamily. EngA (Der) GTPase family. Associates with the 50S ribosomal subunit.

In terms of biological role, GTPase that plays an essential role in the late steps of ribosome biogenesis. The sequence is that of GTPase Der from Aeromonas salmonicida (strain A449).